The primary structure comprises 285 residues: Ribonuclease Z (285 aa).

Zn(2+) contacts are provided by H61, H63, D65, H66, H152, D175, and H239. Residue D65 is the Proton acceptor of the active site.

It belongs to the RNase Z family. Homodimer. Requires Zn(2+) as cofactor.

It catalyses the reaction Endonucleolytic cleavage of RNA, removing extra 3' nucleotides from tRNA precursor, generating 3' termini of tRNAs. A 3'-hydroxy group is left at the tRNA terminus and a 5'-phosphoryl group is left at the trailer molecule.. Zinc phosphodiesterase, which displays some tRNA 3'-processing endonuclease activity. Probably involved in tRNA maturation, by removing a 3'-trailer from precursor tRNA. The polypeptide is Ribonuclease Z (Mycobacterium sp. (strain JLS)).